We begin with the raw amino-acid sequence, 600 residues long: Methionine--tRNA ligase (600 aa).

The 'HIGH' region signature appears at 11–21 (PYANGPRHIGH). 4 residues coordinate Zn(2+): cysteine 143, cysteine 146, cysteine 156, and cysteine 159. A 'KMSKS' region motif is present at residues 351–355 (KFSSS). Serine 354 is an ATP binding site.

It belongs to the class-I aminoacyl-tRNA synthetase family. MetG type 1 subfamily. As to quaternary structure, monomer. Zn(2+) is required as a cofactor.

It is found in the cytoplasm. The enzyme catalyses tRNA(Met) + L-methionine + ATP = L-methionyl-tRNA(Met) + AMP + diphosphate. Is required not only for elongation of protein synthesis but also for the initiation of all mRNA translation through initiator tRNA(fMet) aminoacylation. The sequence is that of Methionine--tRNA ligase from Salinispora arenicola (strain CNS-205).